The primary structure comprises 159 residues: Serine-protein kinase RsbW (159 aa).

This sequence belongs to the anti-sigma-factor family.

The catalysed reaction is L-seryl-[protein] + ATP = O-phospho-L-seryl-[protein] + ADP + H(+). It catalyses the reaction L-threonyl-[protein] + ATP = O-phospho-L-threonyl-[protein] + ADP + H(+). In terms of biological role, negative regulator of sigma-B activity. Phosphorylates and inactivates its specific antagonist protein, RsbV. Upon phosphorylation of RsbV, RsbW is released and binds to sigma-B, thereby blocking its ability to form an RNA polymerase holoenzyme (E-sigma-B). This is Serine-protein kinase RsbW from Staphylococcus aureus (strain Newman).